The primary structure comprises 263 residues: Probable esterase PIR7A (263 aa).

The active-site Acyl-ester intermediate is the Ser-82. Catalysis depends on charge relay system residues Asp-213 and His-241.

This sequence belongs to the AB hydrolase superfamily.

The sequence is that of Probable esterase PIR7A (PIR7A) from Oryza sativa subsp. indica (Rice).